A 308-amino-acid polypeptide reads, in one-letter code: Olfactory receptor 13H1 (308 aa).

Residues 1–25 (MAMDNVTAVFQFLLIGISNYPQWRD) are Extracellular-facing. N-linked (GlcNAc...) asparagine glycosylation occurs at N5. Residues 26-46 (TFFTLVLIIYLSTLLGNGFMI) form a helical membrane-spanning segment. The Cytoplasmic segment spans residues 47 to 54 (FLIHFDPN). The helical transmembrane segment at 55–75 (LHTPIYFFLSNLSFLDLCYGT) threads the bilayer. The Extracellular segment spans residues 76-99 (ASMPQALVHCFSTHPYLSYPRCLA). A disulfide bond links C97 and C188. The chain crosses the membrane as a helical span at residues 100–120 (QTSVSLALATAECLLLAAMAY). The Cytoplasmic segment spans residues 121–139 (DRVVAISNPLRYSVVMNGP). The helical transmembrane segment at 140–159 (VCVCLVATSWGTSLVLTAML) threads the bilayer. At 160 to 196 (ILSLRLHFCGANVINHFACEILSLIKLTCSDTSLNEF) the chain is on the extracellular side. The chain crosses the membrane as a helical span at residues 197–216 (MILITSIFTLLLPFGFVLLS). Residues 217–236 (YIRIAMAIIRIRSLQGRLKA) lie on the Cytoplasmic side of the membrane. Residues 237–257 (FTTCGSHLTVVTIFYGSAISM) form a helical membrane-spanning segment. The Extracellular segment spans residues 258-270 (YMKTQSKSYPDQD). Residues 271–291 (KFISVFYGALTPMLNPLIYSL) traverse the membrane as a helical segment. Residues 292–308 (RKKDVKRAIRKVMLKRT) lie on the Cytoplasmic side of the membrane.

The protein belongs to the G-protein coupled receptor 1 family.

The protein localises to the cell membrane. Odorant receptor. This Homo sapiens (Human) protein is Olfactory receptor 13H1 (OR13H1).